The chain runs to 340 residues: MYRNWTELIKPHTIELGGDETEIQRKATLVAEPLERGFGTTLGNALRRVLLSSLQGAAVSTVRIEGVLHEFSSVPGVIEDVTDIILNIKGLALRMESTGIKNIYLRVDKEGPVTAGMIECETGIEILNPDHHIATLNKSGTLDITMTVTTGKGYVRAQLNREDESYAIGDIPIDASYNPVKKVAYRVENARVGQQTDYDKLIMDIETNGVVTPEDALALAAKILQDQLNPFINFDDVPTAHDHEMEDRPQWNPNLFRKVDELELSVRSANCLKNDDIVYIGDLVQKSESEMLKTPNFGRKSLNEIKEVLDEMGLSLGMTLDTWPPENIDDLSKQFEEENF.

Residues 1 to 235 (MYRNWTELIK…DQLNPFINFD (235 aa)) are alpha N-terminal domain (alpha-NTD). The tract at residues 251-340 (WNPNLFRKVD…LSKQFEEENF (90 aa)) is alpha C-terminal domain (alpha-CTD).

Belongs to the RNA polymerase alpha chain family. Homodimer. The RNAP catalytic core consists of 2 alpha, 1 beta, 1 beta' and 1 omega subunit. When a sigma factor is associated with the core the holoenzyme is formed, which can initiate transcription.

The catalysed reaction is RNA(n) + a ribonucleoside 5'-triphosphate = RNA(n+1) + diphosphate. In terms of biological role, DNA-dependent RNA polymerase catalyzes the transcription of DNA into RNA using the four ribonucleoside triphosphates as substrates. This chain is DNA-directed RNA polymerase subunit alpha, found in Magnetococcus marinus (strain ATCC BAA-1437 / JCM 17883 / MC-1).